Here is a 562-residue protein sequence, read N- to C-terminus: Probable malate:quinone oxidoreductase (562 aa).

The protein belongs to the MQO family. FAD serves as cofactor.

It carries out the reaction (S)-malate + a quinone = a quinol + oxaloacetate. It participates in carbohydrate metabolism; tricarboxylic acid cycle; oxaloacetate from (S)-malate (quinone route): step 1/1. In Stenotrophomonas maltophilia (strain K279a), this protein is Probable malate:quinone oxidoreductase.